The following is a 277-amino-acid chain: Sulfur carrier protein FdhD (277 aa).

Cys123 acts as the Cysteine persulfide intermediate in catalysis. 263–268 is a Mo-bis(molybdopterin guanine dinucleotide) binding site; that stretch reads FVRGNK.

Belongs to the FdhD family.

The protein resides in the cytoplasm. In terms of biological role, required for formate dehydrogenase (FDH) activity. Acts as a sulfur carrier protein that transfers sulfur from IscS to the molybdenum cofactor prior to its insertion into FDH. The sequence is that of Sulfur carrier protein FdhD from Corynebacterium efficiens (strain DSM 44549 / YS-314 / AJ 12310 / JCM 11189 / NBRC 100395).